Here is a 37-residue protein sequence, read N- to C-terminus: Large ribosomal subunit protein bL36 (37 aa).

Belongs to the bacterial ribosomal protein bL36 family.

The chain is Large ribosomal subunit protein bL36 (rpmJ) from Oleidesulfovibrio alaskensis (strain ATCC BAA-1058 / DSM 17464 / G20) (Desulfovibrio alaskensis).